A 584-amino-acid chain; its full sequence is Protein phosphatase 2A scaffold subunit (584 aa).

HEAT repeat units follow at residues 7-45, 46-84, 86-123, 168-206, 207-239, 240-278, 279-317, 318-356, 358-395, 397-434, 441-479, 480-512, 513-551, and 553-584; these read ESDD…ALGP, ERTR…FVGG, EHAV…EIPT, LRKT…VKSE, ILPL…MLTN, EENI…SMGT, EITK…LLTK, EMNI…IYGK, DTLT…VIGI, MLSQ…QLGV, LGNL…AKNN, IIPK…VVGG, DVIS…LLDS, and IVQS…LQLC.

This sequence belongs to the phosphatase 2A regulatory subunit A family. In terms of assembly, component of the Sca1 complex composed of at least gefA, gefH, scaA, phr, and the protein phosphatase 2A subunits pppA and pho2B.

The protein resides in the cytoplasm. Its subcellular location is the cytosol. It is found in the cell membrane. Functionally, scaffolding molecule which may coordinate the assembly of the catalytic subunit and a variable regulatory B subunit. Component of the Sca1 complex, a regulator of cell motility, chemotaxis and signal relay. The Sca1 complex is recruited to the plasma membrane in a chemoattractant- and F-actin-dependent manner and is enriched at the leading edge of chemotaxing cells where it regulates F-actin dynamics and signal relay by controlling the activation of rasC and the downstream target of rapamycin complex 2 (TORC2)-Akt/protein kinase B (PKB) pathway. This is Protein phosphatase 2A scaffold subunit (pppA) from Dictyostelium discoideum (Social amoeba).